The following is a 2844-amino-acid chain: Sodium channel protein 60E (2844 aa).

Over Met1–Tyr121 the chain is Cytoplasmic. The I repeat unit spans residues Phe107–Lys434. Residues Ile122–Met145 form a helical membrane-spanning segment. Residues Thr146–Glu151 lie on the Extracellular side of the membrane. A helical membrane pass occupies residues Ala152 to Gly172. Topologically, residues Phe173 to Asn183 are cytoplasmic. The chain crosses the membrane as a helical span at residues Pro184 to Met202. The Extracellular portion of the chain corresponds to Glu203–Ala208. The chain crosses the membrane as a helical; Voltage-sensor span at residues Gly209–Leu228. At Lys229–Glu244 the chain is on the cytoplasmic side. A helical membrane pass occupies residues Val245–Met265. Residues Gly266 to Asn340 are Extracellular-facing. Cys272 and Cys318 are joined by a disulfide. Asn282, Asn293, and Asn311 each carry an N-linked (GlcNAc...) asparagine glycan. The segment at residues Phe341 to Leu365 is an intramembrane region (pore-forming). Residues Ala366 to Ser374 are Extracellular-facing. A helical transmembrane segment spans residues Phe375–Val395. The Cytoplasmic portion of the chain corresponds to Ala396 to Asp687. Positions Ala452–Val610 are disordered. Over residues Ser455–Lys465 the composition is skewed to basic residues. Residues Glu469–Ser479 are compositionally biased toward gly residues. 2 stretches are compositionally biased toward low complexity: residues Gln511–Glu520 and Ser577–Glu586. Over residues Gly593 to Thr603 the composition is skewed to acidic residues. Residues Cys668–Asn1130 form an II repeat. Residues Pro688–Glu708 traverse the membrane as a helical segment. At His709–Asn718 the chain is on the extracellular side. The helical transmembrane segment at Ala719–Ser743 threads the bilayer. At Lys744–Cys749 the chain is on the cytoplasmic side. The helical transmembrane segment at Gly750–Glu769 threads the bilayer. Topologically, residues Leu770 to Ser775 are extracellular. Residues Val776 to Met795 form a helical; Voltage-sensor membrane-spanning segment. Residues Lys796–Gly810 lie on the Cytoplasmic side of the membrane. Residues Asn811–Ser832 form a helical membrane-spanning segment. Topologically, residues Lys833–Asp852 are extracellular. The segment at residues Phe853 to Trp873 is an intramembrane region (pore-forming). Residues Asp874–Ala889 lie on the Extracellular side of the membrane. Cys875 and Cys887 form a disulfide bridge. A helical transmembrane segment spans residues Ile890 to Leu910. The Cytoplasmic portion of the chain corresponds to Leu911–Thr1742. Over residues Tyr1129–Asn1157 the composition is skewed to polar residues. 5 disordered regions span residues Tyr1129–Glu1166, Tyr1185–Ser1224, Ile1268–Thr1288, Ala1577–Ser1630, and Leu1635–Lys1654. Low complexity predominate over residues Arg1191–Leu1203. Over residues Leu1204–Arg1213 the composition is skewed to basic and acidic residues. Polar residues-rich tracts occupy residues Pro1277–Asn1286, Pro1604–Arg1618, and Lys1640–Lys1654. An III repeat occupies Pro1723–Lys2040. A helical membrane pass occupies residues Ala1743–Ala1763. The Extracellular segment spans residues Ser1764 to Asn1789. N-linked (GlcNAc...) asparagine glycans are attached at residues Asn1778 and Asn1789. A helical transmembrane segment spans residues Phe1790–Ser1810. Topologically, residues Lys1811 to Phe1813 are cytoplasmic. Residues Thr1814–Ile1834 form a helical membrane-spanning segment. The Extracellular segment spans residues Glu1835–Asn1839. A helical; Voltage-sensor membrane pass occupies residues Leu1840–Trp1861. Residues Gln1862 to Asn1880 are Cytoplasmic-facing. The helical transmembrane segment at Val1881–Gly1902 threads the bilayer. Residues Lys1903–Val1943 are Extracellular-facing. Asn1930 is a glycosylation site (N-linked (GlcNAc...) asparagine). Residues Gly1944–Asp1965 constitute an intramembrane region (pore-forming). The Extracellular portion of the chain corresponds to Ala1966 to Asn1981. A helical transmembrane segment spans residues Leu1982–Leu2002. Residues Phe2003–Arg2069 lie on the Cytoplasmic side of the membrane. The IV repeat unit spans residues Ile2050 to Asn2311. The helical transmembrane segment at Phe2070–Tyr2090 threads the bilayer. Topologically, residues Asp2091–Ala2095 are extracellular. A helical transmembrane segment spans residues Val2096–Ile2116. The Cytoplasmic portion of the chain corresponds to Val2117–Asn2132. Residues Val2133–Ile2153 form a helical membrane-spanning segment. Over Asp2154–Leu2162 the chain is Extracellular. Residues Arg2163 to Arg2184 traverse the membrane as a helical; Voltage-sensor segment. The Cytoplasmic portion of the chain corresponds to Lys2185–Asn2199. The chain crosses the membrane as a helical span at residues Ile2200–Gly2220. Residues Asn2221–Thr2236 lie on the Extracellular side of the membrane. Positions Phe2237–Ser2259 form an intramembrane region, pore-forming. The Extracellular portion of the chain corresponds to Leu2260–Tyr2288. The helical transmembrane segment at Phe2289–Leu2309 threads the bilayer. The Cytoplasmic segment spans residues Glu2310–Arg2844. The 30-residue stretch at Gln2441–Ser2470 folds into the IQ domain. 4 disordered regions span residues Arg2457–Gly2479, Ser2584–Gln2668, Asp2780–Ile2802, and Asn2818–Arg2844. The segment covering Ser2467–Gly2479 has biased composition (polar residues). Residues Ala2595–Ser2632 show a composition bias toward low complexity. Over residues Ser2647–Lys2658 the composition is skewed to basic residues. Residues Asp2825–Phe2836 show a composition bias toward polar residues.

This sequence belongs to the sodium channel (TC 1.A.1.10) family. NaCP60E subfamily. In embryonic and larval stages, expression is limited to very few non-neuronal cells in either the CNS or PNS. In pupal and adult stages, expressed in cell bodies of the fly central nervous system, including optic lobes, central brain, subesophageal ganglion, thoracico-abdominal ganglion, major olfactory organs, the third antennal segment and the maxillary palps.

The protein localises to the cell membrane. Mediates the voltage-dependent sodium ion permeability of excitable membranes. Plays a role in processing of olfactory information during the olfactory avoidance response. This is Sodium channel protein 60E (NaCP60E) from Drosophila melanogaster (Fruit fly).